Reading from the N-terminus, the 112-residue chain is Probable prefoldin subunit 1 (112 aa).

The protein belongs to the prefoldin subunit beta family. As to quaternary structure, heterohexamer of two PFD-alpha type and four PFD-beta type subunits.

In terms of biological role, binds specifically to cytosolic chaperonin (c-CPN) and transfers target proteins to it. Binds to nascent polypeptide chain and promotes folding in an environment in which there are many competing pathways for nonnative proteins. The chain is Probable prefoldin subunit 1 from Schizosaccharomyces pombe (strain 972 / ATCC 24843) (Fission yeast).